A 490-amino-acid polypeptide reads, in one-letter code: Cytochrome P450 90D2 (490 aa).

The helical transmembrane segment at 4–24 threads the bilayer; that stretch reads AAAGWAAPAFAVAAVVIWVVL. Residue C437 coordinates heme.

Belongs to the cytochrome P450 family. The cofactor is heme.

The protein localises to the membrane. The enzyme catalyses 6-deoxoteasterone + reduced [NADPH--hemoprotein reductase] + O2 = 3-dehydro-6-deoxoteasterone + oxidized [NADPH--hemoprotein reductase] + 2 H2O + H(+). The protein operates within plant hormone biosynthesis; brassinosteroid biosynthesis. In terms of biological role, catalyzes the C6-oxidation step in brassinosteroids biosynthesis. May convert 6-deoxoteasterone (6-deoxoTE) to 3-dehydro-6-deoxoteasterone (6-deoxo3DT, 6-deoxo3DHT), and teasterone (TE) to 3-dehydroteasterone (3DT, 3-DHT). Involved in the elongation of leaf sheaths and stems. The chain is Cytochrome P450 90D2 from Oryza sativa subsp. indica (Rice).